We begin with the raw amino-acid sequence, 248 residues long: DNA repair protein RecO (248 aa).

Belongs to the RecO family.

Functionally, involved in DNA repair and RecF pathway recombination. This Rubrobacter xylanophilus (strain DSM 9941 / JCM 11954 / NBRC 16129 / PRD-1) protein is DNA repair protein RecO.